Reading from the N-terminus, the 220-residue chain is Dual specificity phosphatase 29 (220 aa).

The Tyrosine-protein phosphatase domain occupies 54–202 (HVNEVWPKLY…LRELDKQLVQ (149 aa)). 146 to 153 (HCVMGRSR) contacts substrate. The active-site Phosphocysteine intermediate is C147.

It belongs to the protein-tyrosine phosphatase family. Non-receptor class dual specificity subfamily. In terms of assembly, homodimer. Interacts with PRKAA2.

It localises to the cytoplasm. It is found in the nucleus. It carries out the reaction O-phospho-L-tyrosyl-[protein] + H2O = L-tyrosyl-[protein] + phosphate. The enzyme catalyses O-phospho-L-seryl-[protein] + H2O = L-seryl-[protein] + phosphate. It catalyses the reaction O-phospho-L-threonyl-[protein] + H2O = L-threonyl-[protein] + phosphate. Functionally, dual specificity phosphatase able to dephosphorylate phosphotyrosine, phosphoserine and phosphothreonine residues within the same substrate, with a preference for phosphotyrosine as a substrate. Involved in the modulation of intracellular signaling cascades. In skeletal muscle regulates systemic glucose homeostasis by activating, AMPK, an energy sensor protein kinase. Affects MAP kinase signaling though modulation of the ERK1/2 cascade in skeletal muscle promoting muscle cell differentiation, development and atrophy. The protein is Dual specificity phosphatase 29 (DUSP29) of Pan troglodytes (Chimpanzee).